Reading from the N-terminus, the 479-residue chain is Sulfate adenylyltransferase subunit 1 (479 aa).

A tr-type G domain is found at 25 to 239; sequence KSLLRFLTCG…EVLETVDIQR (215 aa). The segment at 34–41 is G1; it reads GSVDDGKS. 34–41 serves as a coordination point for GTP; sequence GSVDDGKS. The tract at residues 92-96 is G2; it reads GITID. The G3 stretch occupies residues 113-116; sequence DTPG. GTP-binding positions include 113–117 and 168–171; these read DTPGH and NKMD. The tract at residues 168-171 is G4; it reads NKMD. A G5 region spans residues 206–208; sequence SAL.

This sequence belongs to the TRAFAC class translation factor GTPase superfamily. Classic translation factor GTPase family. CysN/NodQ subfamily. As to quaternary structure, heterodimer composed of CysD, the smaller subunit, and CysN.

The catalysed reaction is sulfate + ATP + H(+) = adenosine 5'-phosphosulfate + diphosphate. It participates in sulfur metabolism; hydrogen sulfide biosynthesis; sulfite from sulfate: step 1/3. Functionally, with CysD forms the ATP sulfurylase (ATPS) that catalyzes the adenylation of sulfate producing adenosine 5'-phosphosulfate (APS) and diphosphate, the first enzymatic step in sulfur assimilation pathway. APS synthesis involves the formation of a high-energy phosphoric-sulfuric acid anhydride bond driven by GTP hydrolysis by CysN coupled to ATP hydrolysis by CysD. This Salmonella choleraesuis (strain SC-B67) protein is Sulfate adenylyltransferase subunit 1.